A 361-amino-acid chain; its full sequence is Histidinol-phosphate aminotransferase (361 aa).

Lys218 is subject to N6-(pyridoxal phosphate)lysine.

Belongs to the class-II pyridoxal-phosphate-dependent aminotransferase family. Histidinol-phosphate aminotransferase subfamily. In terms of assembly, homodimer. Requires pyridoxal 5'-phosphate as cofactor.

It catalyses the reaction L-histidinol phosphate + 2-oxoglutarate = 3-(imidazol-4-yl)-2-oxopropyl phosphate + L-glutamate. The protein operates within amino-acid biosynthesis; L-histidine biosynthesis; L-histidine from 5-phospho-alpha-D-ribose 1-diphosphate: step 7/9. The polypeptide is Histidinol-phosphate aminotransferase (Ruegeria pomeroyi (strain ATCC 700808 / DSM 15171 / DSS-3) (Silicibacter pomeroyi)).